We begin with the raw amino-acid sequence, 946 residues long: DDB1- and CUL4-associated factor 5 (946 aa).

6 WD repeats span residues 51-91 (GHFG…HSRV), 99-139 (EHHS…LDVF), 140-180 (AHED…HGEP), 185-225 (NYPS…SSLL), 277-317 (FNSC…EAGG), and 331-370 (GHRS…GCTG). The interval 449–478 (GVSERSGYTDSESSASLPRSPPPTVDESAD) is disordered. The segment covering 454–465 (SGYTDSESSASL) has biased composition (polar residues). Residue threonine 500 is modified to Phosphothreonine. Disordered stretches follow at residues 527-656 (LSNE…MESV), 675-860 (SNNK…ELET), and 894-946 (CETP…KLKT). 2 positions are modified to phosphoserine: serine 531 and serine 533. Acidic residues predominate over residues 531-544 (SDSEENVCEAELDT). Positions 555-567 (PEDGSSSPSSSTS) are enriched in low complexity. The segment covering 579–592 (ATTRQRNAMRRRQK) has biased composition (basic residues). Positions 625-638 (LSPSPDSSPERSAS) are enriched in low complexity. Residues serine 626, serine 628, and serine 645 each carry the phosphoserine modification. The segment covering 691-701 (EGRAGTSHKDN) has biased composition (basic and acidic residues). 2 stretches are compositionally biased toward polar residues: residues 760–769 (GTSQDTNNSG) and 808–819 (TLNSASGNCPRT).

Interacts with DDB1, CUL4A or CUL4B. Interacts with L3MBTL3. Interacts with SOX2. Interacts with DNMT1. Interacts with E2F1.

Its pathway is protein modification; protein ubiquitination. In terms of biological role, is a substrate receptor for the CUL4-DDB1 E3 ubiquitin-protein ligase complex (CRL4), involved in the ubiquitination of a set of methylated non-histone proteins, including SOX2. The complex CRL4-DCAF5 is also involved in the ubiquitination of methylated DNMT1 and E2F1. The polypeptide is DDB1- and CUL4-associated factor 5 (Dcaf5) (Mus musculus (Mouse)).